Consider the following 311-residue polypeptide: CD-NTase-associated protein 12 (311 aa).

The TIR domain occupies 4–121; sequence RIFIGSSKEG…LLGITVPQFE (118 aa). Residues 157–311 form an STING domain region; sequence STVLAIGYFY…RNIVKIIQEE (155 aa). Residues F168, P232, and D249 each coordinate 3',3'-c-di-GMP.

It in the C-terminal section; belongs to the bacterial STING family. In terms of assembly, forms homodimers; in the presence of c-di-GMP forms filaments with an ordered array of parallel-stacked subunits.

The enzyme catalyses NAD(+) + H2O = ADP-D-ribose + nicotinamide + H(+). With respect to regulation, NAD(+) hydrolase activity is strongly stimulated by c-di-GMP, weakly by 3'3'-cGAMP, very weakly by c-di-AMP but not at all by 2'3'-cGAMP. Self-association of TIR domains is required for NADase activity. Functionally, effector protein of a CBASS antiviral system with NAD(+) hydrolase activity. CBASS (cyclic oligonucleotide-based antiphage signaling system) provides immunity against bacteriophage. The CD-NTase protein synthesizes cyclic nucleotides in response to infection; these serve as specific second messenger signals. The signals activate a diverse range of effectors, leading to bacterial cell death and thus abortive phage infection. A type I-D CBASS(GG) system. Binds c-di-GMP, does not bind cUMP-AMP. Upon activation by c-di-GMP forms filaments which hydrolyze NAD(+); filament formation is required for enzyme activation. The chain is CD-NTase-associated protein 12 from Flavobacterium daejeonense.